A 350-amino-acid polypeptide reads, in one-letter code: Dihydroorotase (350 aa).

Positions 13 and 15 each coordinate Zn(2+). Residues H15–R17 and N41 each bind substrate. Zn(2+)-binding residues include K99, H136, and H174. K99 carries the post-translational modification N6-carboxylysine. Residue H136 participates in substrate binding. L219 serves as a coordination point for substrate. Zn(2+) is bound at residue D247. D247 is an active-site residue. Substrate is bound by residues H251 and A263.

Belongs to the metallo-dependent hydrolases superfamily. DHOase family. Class II DHOase subfamily. Homodimer. Zn(2+) serves as cofactor.

The enzyme catalyses (S)-dihydroorotate + H2O = N-carbamoyl-L-aspartate + H(+). The protein operates within pyrimidine metabolism; UMP biosynthesis via de novo pathway; (S)-dihydroorotate from bicarbonate: step 3/3. Its function is as follows. Catalyzes the reversible cyclization of carbamoyl aspartate to dihydroorotate. The polypeptide is Dihydroorotase (Allorhizobium ampelinum (strain ATCC BAA-846 / DSM 112012 / S4) (Agrobacterium vitis (strain S4))).